Reading from the N-terminus, the 356-residue chain is Dihydroorotate dehydrogenase (quinone) (356 aa).

FMN-binding positions include Ala-68 to Lys-72 and Thr-92. Lys-72 contacts substrate. Asn-117–Phe-121 is a substrate binding site. The FMN site is built by Asn-145 and Asn-178. A substrate-binding site is contributed by Asn-178. The active-site Nucleophile is the Ser-181. Asn-183 is a substrate binding site. FMN-binding residues include Lys-214 and Thr-242. A substrate-binding site is contributed by Asn-243 to Thr-244. Residues Gly-266, Gly-295, and Tyr-316–Thr-317 each bind FMN.

The protein belongs to the dihydroorotate dehydrogenase family. Type 2 subfamily. In terms of assembly, monomer. It depends on FMN as a cofactor.

It localises to the cell membrane. It catalyses the reaction (S)-dihydroorotate + a quinone = orotate + a quinol. Its pathway is pyrimidine metabolism; UMP biosynthesis via de novo pathway; orotate from (S)-dihydroorotate (quinone route): step 1/1. Functionally, catalyzes the conversion of dihydroorotate to orotate with quinone as electron acceptor. This chain is Dihydroorotate dehydrogenase (quinone), found in Mycobacterium sp. (strain KMS).